Here is a 194-residue protein sequence, read N- to C-terminus: FMN-dependent NADH:quinone oxidoreductase (194 aa).

FMN is bound by residues S10 and 90 to 93 (MYNL).

The protein belongs to the azoreductase type 1 family. In terms of assembly, homodimer. FMN serves as cofactor.

It catalyses the reaction 2 a quinone + NADH + H(+) = 2 a 1,4-benzosemiquinone + NAD(+). It carries out the reaction N,N-dimethyl-1,4-phenylenediamine + anthranilate + 2 NAD(+) = 2-(4-dimethylaminophenyl)diazenylbenzoate + 2 NADH + 2 H(+). Its function is as follows. Quinone reductase that provides resistance to thiol-specific stress caused by electrophilic quinones. In terms of biological role, also exhibits azoreductase activity. Catalyzes the reductive cleavage of the azo bond in aromatic azo compounds to the corresponding amines. The sequence is that of FMN-dependent NADH:quinone oxidoreductase from Haemophilus influenzae (strain PittEE).